The sequence spans 39 residues: Cytochrome b559 subunit beta (39 aa).

A helical transmembrane segment spans residues 14 to 30; it reads WLAVHGLAIPTVSFLGS. Residue histidine 18 coordinates heme.

The protein belongs to the PsbE/PsbF family. Heterodimer of an alpha subunit and a beta subunit. PSII is composed of 1 copy each of membrane proteins PsbA, PsbB, PsbC, PsbD, PsbE, PsbF, PsbH, PsbI, PsbJ, PsbK, PsbL, PsbM, PsbT, PsbX, PsbY, PsbZ, Psb30/Ycf12, at least 3 peripheral proteins of the oxygen-evolving complex and a large number of cofactors. It forms dimeric complexes. Heme b is required as a cofactor.

The protein resides in the plastid. Its subcellular location is the chloroplast thylakoid membrane. In terms of biological role, this b-type cytochrome is tightly associated with the reaction center of photosystem II (PSII). PSII is a light-driven water:plastoquinone oxidoreductase that uses light energy to abstract electrons from H(2)O, generating O(2) and a proton gradient subsequently used for ATP formation. It consists of a core antenna complex that captures photons, and an electron transfer chain that converts photonic excitation into a charge separation. The sequence is that of Cytochrome b559 subunit beta from Beta vulgaris (Sugar beet).